The chain runs to 268 residues: 4-hydroxy-tetrahydrodipicolinate reductase (268 aa).

8 to 13 (GAAGRM) provides a ligand contact to NAD(+). Position 36 (Arg36) interacts with NADP(+). Residues 99–101 (GTT) and 123–126 (AANF) each bind NAD(+). His156 acts as the Proton donor/acceptor in catalysis. His157 serves as a coordination point for (S)-2,3,4,5-tetrahydrodipicolinate. The Proton donor role is filled by Lys160. Residue 166-167 (GT) coordinates (S)-2,3,4,5-tetrahydrodipicolinate.

Belongs to the DapB family.

It localises to the cytoplasm. The enzyme catalyses (S)-2,3,4,5-tetrahydrodipicolinate + NAD(+) + H2O = (2S,4S)-4-hydroxy-2,3,4,5-tetrahydrodipicolinate + NADH + H(+). The catalysed reaction is (S)-2,3,4,5-tetrahydrodipicolinate + NADP(+) + H2O = (2S,4S)-4-hydroxy-2,3,4,5-tetrahydrodipicolinate + NADPH + H(+). It participates in amino-acid biosynthesis; L-lysine biosynthesis via DAP pathway; (S)-tetrahydrodipicolinate from L-aspartate: step 4/4. Catalyzes the conversion of 4-hydroxy-tetrahydrodipicolinate (HTPA) to tetrahydrodipicolinate. The polypeptide is 4-hydroxy-tetrahydrodipicolinate reductase (Pseudomonas fluorescens (strain Pf0-1)).